We begin with the raw amino-acid sequence, 436 residues long: 3-ketoacyl-CoA thiolase (436 aa).

The Acyl-thioester intermediate role is filled by cysteine 99. Residues histidine 392 and cysteine 422 each act as proton acceptor in the active site.

Belongs to the thiolase-like superfamily. Thiolase family. As to quaternary structure, heterotetramer of two alpha chains (FadJ) and two beta chains (FadI).

It localises to the cytoplasm. The catalysed reaction is an acyl-CoA + acetyl-CoA = a 3-oxoacyl-CoA + CoA. It participates in lipid metabolism; fatty acid beta-oxidation. Catalyzes the final step of fatty acid oxidation in which acetyl-CoA is released and the CoA ester of a fatty acid two carbons shorter is formed. The polypeptide is 3-ketoacyl-CoA thiolase (Escherichia coli O157:H7).